Here is a 342-residue protein sequence, read N- to C-terminus: MSEAIKTDVLIVGAGPCGLFAVFELGLLDVKVHLVDILDKVGGQCAELYPEKPIYDIPGIPMITGHGLTESLMEQIKPFDPQFHLGEMIETVEQIGDPGFRVTTDAGTVFECKVLVVAAGGGSFQPKRPPVPGVEHYEGKSVHYAVRKMDEFRGKDILIVGGGDSALDWTLNLNPICKSMTLVHRRDDFRGAPHSVEQMRQLVASGKLDLKIGQITALQGENGQLEGATIKLNDNSTAQIKCDAMLPFFGLTMKLGPVANWGLHLENNLIPVDTGTFETNVPGIFAIGDINTYPGKLKLILSGFHEGALMAQKAVKYVYPDKRVVFQYTTSSTSLQKKLGVN.

FAD is bound by residues Cys17, Asp36, Gln44, Tyr49, Ile89, Phe124, Asp289, and Thr330.

Belongs to the ferredoxin--NADP reductase type 2 family. In terms of assembly, homodimer. Requires FAD as cofactor.

The catalysed reaction is 2 reduced [2Fe-2S]-[ferredoxin] + NADP(+) + H(+) = 2 oxidized [2Fe-2S]-[ferredoxin] + NADPH. This Rhodopseudomonas palustris (strain BisA53) protein is Ferredoxin--NADP reductase.